We begin with the raw amino-acid sequence, 329 residues long: Probable alpha-1,2-galactosyltransferase gmh1 (329 aa).

The Cytoplasmic portion of the chain corresponds to 1 to 14 (MLSFFTKNTLTKRK). The helical; Signal-anchor for type II membrane protein transmembrane segment at 15-35 (LIMLALAIVFTFFAFGLYFIP) threads the bilayer. Topologically, residues 36–329 (HDEISVFDFK…LWTKYKDKII (294 aa)) are lumenal. 2 N-linked (GlcNAc...) asparagine glycosylation sites follow: asparagine 127 and asparagine 169.

Belongs to the glycosyltransferase 34 family.

It is found in the golgi apparatus membrane. The polypeptide is Probable alpha-1,2-galactosyltransferase gmh1 (gmh1) (Schizosaccharomyces pombe (strain 972 / ATCC 24843) (Fission yeast)).